The primary structure comprises 421 residues: Histidine--tRNA ligase (421 aa).

It belongs to the class-II aminoacyl-tRNA synthetase family. In terms of assembly, homodimer.

Its subcellular location is the cytoplasm. The enzyme catalyses tRNA(His) + L-histidine + ATP = L-histidyl-tRNA(His) + AMP + diphosphate + H(+). In Caldicellulosiruptor bescii (strain ATCC BAA-1888 / DSM 6725 / KCTC 15123 / Z-1320) (Anaerocellum thermophilum), this protein is Histidine--tRNA ligase.